The chain runs to 338 residues: Ketol-acid reductoisomerase (NADP(+)) (338 aa).

Positions 1–181 (MKVSYDKDCD…GGGRTGIIET (181 aa)) constitute a KARI N-terminal Rossmann domain. NADP(+) contacts are provided by residues 24-27 (YGSQ), Arg47, Ser50, Ser52, and 82-85 (DEFQ). The active site involves His107. Gly133 serves as a coordination point for NADP(+). The KARI C-terminal knotted domain maps to 182-327 (TFKDETETDL…EKLRAMMPWI (146 aa)). Asp190, Glu194, Glu226, and Glu230 together coordinate Mg(2+). Ser251 serves as a coordination point for substrate.

This sequence belongs to the ketol-acid reductoisomerase family. It depends on Mg(2+) as a cofactor.

The catalysed reaction is (2R)-2,3-dihydroxy-3-methylbutanoate + NADP(+) = (2S)-2-acetolactate + NADPH + H(+). The enzyme catalyses (2R,3R)-2,3-dihydroxy-3-methylpentanoate + NADP(+) = (S)-2-ethyl-2-hydroxy-3-oxobutanoate + NADPH + H(+). It functions in the pathway amino-acid biosynthesis; L-isoleucine biosynthesis; L-isoleucine from 2-oxobutanoate: step 2/4. Its pathway is amino-acid biosynthesis; L-valine biosynthesis; L-valine from pyruvate: step 2/4. In terms of biological role, involved in the biosynthesis of branched-chain amino acids (BCAA). Catalyzes an alkyl-migration followed by a ketol-acid reduction of (S)-2-acetolactate (S2AL) to yield (R)-2,3-dihydroxy-isovalerate. In the isomerase reaction, S2AL is rearranged via a Mg-dependent methyl migration to produce 3-hydroxy-3-methyl-2-ketobutyrate (HMKB). In the reductase reaction, this 2-ketoacid undergoes a metal-dependent reduction by NADPH to yield (R)-2,3-dihydroxy-isovalerate. In Stutzerimonas stutzeri (strain A1501) (Pseudomonas stutzeri), this protein is Ketol-acid reductoisomerase (NADP(+)).